Consider the following 436-residue polypeptide: 3-ketoacyl-CoA thiolase (436 aa).

Cys-99 acts as the Acyl-thioester intermediate in catalysis. Catalysis depends on proton acceptor residues His-392 and Cys-422.

The protein belongs to the thiolase-like superfamily. Thiolase family. As to quaternary structure, heterotetramer of two alpha chains (FadJ) and two beta chains (FadI).

Its subcellular location is the cytoplasm. It catalyses the reaction an acyl-CoA + acetyl-CoA = a 3-oxoacyl-CoA + CoA. Its pathway is lipid metabolism; fatty acid beta-oxidation. In terms of biological role, catalyzes the final step of fatty acid oxidation in which acetyl-CoA is released and the CoA ester of a fatty acid two carbons shorter is formed. The sequence is that of 3-ketoacyl-CoA thiolase from Shigella dysenteriae serotype 1 (strain Sd197).